Consider the following 407-residue polypeptide: Substance-P receptor (407 aa).

Over 1–31 (MDNVLPGDSDLFPNISTNSSESNQFVQPAWQ) the chain is Extracellular. Residues N14 and N18 are each glycosylated (N-linked (GlcNAc...) asparagine). The chain crosses the membrane as a helical span at residues 32–54 (IVLWAAAYTVIVVTSVVGNVVVM). Over 55-64 (WIILAHKRMR) the chain is Cytoplasmic. The helical transmembrane segment at 65–86 (TVTNYFLVNLAFAEASMAAFNT) threads the bilayer. The Extracellular portion of the chain corresponds to 87–106 (VVNFTYAVHNEWYYGLFYCK). N89 carries N-linked (GlcNAc...) asparagine glycosylation. The cysteines at positions 105 and 180 are disulfide-linked. Residues 107–128 (FHNFFPIAAVFASIYSMTAVAF) traverse the membrane as a helical segment. Topologically, residues 129 to 148 (DRYMAIIHPLQPRLSATATK) are cytoplasmic. The chain crosses the membrane as a helical span at residues 149 to 169 (VVIFVIWVLALLLAFPQGYYS). Over 170–194 (TTETMPGRVVCMIEWPEHPNRTYEK) the chain is Extracellular. The N-linked (GlcNAc...) asparagine glycan is linked to N189. Residues 195-219 (AYHICVTVLIYFLPLLVIGYAYTVV) traverse the membrane as a helical segment. The Cytoplasmic segment spans residues 220–248 (GITLWASEIPGDSSDRYHEQVSAKRKVVK). Residues 249 to 270 (MMIVVVCTFAICWLPFHVFFLL) form a helical membrane-spanning segment. Topologically, residues 271–283 (PYINPDLYVKKFI) are extracellular. Residues 284 to 308 (QQVYLAIMWLAMSSTMYNPIIYCCL) traverse the membrane as a helical segment. Residues 309–407 (NDRFRLGFKH…SSSFYSNMLA (99 aa)) lie on the Cytoplasmic side of the membrane. A lipid anchor (S-palmitoyl cysteine) is attached at C322. Residues 365-407 (HEDEAEEGPKATPSSLDLTSNGSSRSNSKTMTESSSFYSNMLA) are disordered. Polar residues predominate over residues 376–407 (TPSSLDLTSNGSSRSNSKTMTESSSFYSNMLA).

Belongs to the G-protein coupled receptor 1 family. In terms of assembly, interacts with ARRB1.

The protein localises to the cell membrane. Functionally, this is a receptor for the tachykinin neuropeptide substance P. It is probably associated with G proteins that activate a phosphatidylinositol-calcium second messenger system. The chain is Substance-P receptor (TACR1) from Meriones unguiculatus (Mongolian jird).